A 466-amino-acid polypeptide reads, in one-letter code: Asparagine--tRNA ligase (466 aa).

This sequence belongs to the class-II aminoacyl-tRNA synthetase family. In terms of assembly, homodimer.

Its subcellular location is the cytoplasm. The enzyme catalyses tRNA(Asn) + L-asparagine + ATP = L-asparaginyl-tRNA(Asn) + AMP + diphosphate + H(+). This Shewanella sp. (strain ANA-3) protein is Asparagine--tRNA ligase.